We begin with the raw amino-acid sequence, 744 residues long: NADH-ubiquinone oxidoreductase 78 kDa subunit, mitochondrial (744 aa).

Residues 1–10 (MLRSTLSRSA) are compositionally biased toward polar residues. The interval 1-26 (MLRSTLSRSAWRTGRHQAARNASRAF) is disordered. The transit peptide at 1 to 33 (MLRSTLSRSAWRTGRHQAARNASRAFSATAQRP) directs the protein to the mitochondrion. One can recognise a 2Fe-2S ferredoxin-type domain in the interval 34–112 (AEVELTIDGK…GMVVKTNSPL (79 aa)). Positions 68, 79, 82, and 96 each coordinate [2Fe-2S] cluster. One can recognise a 4Fe-4S His(Cys)3-ligated-type domain in the interval 112-151 (LTHKAREGVMEFLLANHPLDCPICDQGGECDLQDQSMRYG). Positions 128, 132, 135, 141, 182, 185, 188, and 232 each coordinate [4Fe-4S] cluster. One can recognise a 4Fe-4S Mo/W bis-MGD-type domain in the interval 251–307 (LKKTESIDVLDGLGSNIRVDTRGLEVMRILPRLNDEVNEEWINDKTRFACDGLKTQR).

It belongs to the complex I 75 kDa subunit family. Complex I is composed of about 40 different subunits. [2Fe-2S] cluster serves as cofactor. The cofactor is [4Fe-4S] cluster.

The protein resides in the mitochondrion inner membrane. It carries out the reaction a ubiquinone + NADH + 5 H(+)(in) = a ubiquinol + NAD(+) + 4 H(+)(out). Its function is as follows. Core subunit of the mitochondrial membrane respiratory chain NADH dehydrogenase (Complex I) that is believed to belong to the minimal assembly required for catalysis. Complex I functions in the transfer of electrons from NADH to the respiratory chain. The immediate electron acceptor for the enzyme is believed to be ubiquinone. This is the largest subunit of complex I and it is a component of the iron-sulfur (IP) fragment of the enzyme. It may form part of the active site crevice where NADH is oxidized. The sequence is that of NADH-ubiquinone oxidoreductase 78 kDa subunit, mitochondrial (nuo78) from Neurospora crassa (strain ATCC 24698 / 74-OR23-1A / CBS 708.71 / DSM 1257 / FGSC 987).